A 152-amino-acid polypeptide reads, in one-letter code: uncharacterized protein (152 aa).

At 1–5 (MWFPQ) the chain is on the cytoplasmic side. A helical membrane pass occupies residues 6 to 26 (IIAGMAAGGAASAMTPGKVLF). Topologically, residues 27 to 38 (TNALGLGCSRSR) are extracellular. Residues 39–59 (GLFLEMFGTAVLCFTVLMTAV) form a helical membrane-spanning segment. At 60-65 (EKRETN) the chain is on the cytoplasmic side. Residues 66 to 86 (FMAALPIGISLFMAHMALTGY) form a helical membrane-spanning segment. Residues 87 to 110 (TGTGVNPARSLGAAVAARYFPHYH) are Extracellular-facing. The NPA motif lies at 92–94 (NPA). A helical membrane pass occupies residues 111-131 (WIYWISPLLGAFLAWSVWQLL). At 132–152 (QILDYTTYVNAEKAAGQKKED) the chain is on the cytoplasmic side.

Belongs to the MIP/aquaporin (TC 1.A.8) family.

It is found in the membrane. This is an uncharacterized protein from Saccharomyces cerevisiae (strain YJM789) (Baker's yeast).